Reading from the N-terminus, the 364-residue chain is Guanine nucleotide-binding protein alpha-8 subunit (364 aa).

G2 is lipidated: N-myristoyl glycine. A lipid anchor (S-palmitoyl cysteine) is attached at C5. The region spanning 38 to 364 is the G-alpha domain; that stretch reads KILKLLILGP…QHTMQKVGIQ (327 aa). The segment at 41 to 54 is G1 motif; that stretch reads KLLILGPGESGKST. GTP-binding positions include 46–53, 186–192, 211–215, 280–283, and A336; these read GPGESGKS, LKSRVPT, DVGGQ, and NKID. 2 residues coordinate Mg(2+): S53 and T192. Residues 184–192 are G2 motif; sequence DILKSRVPT. The tract at residues 207 to 216 is G3 motif; it reads FKIFDVGGQR. The interval 276–283 is G4 motif; sequence ILFLNKID. The segment at 334–339 is G5 motif; it reads TCATDT.

The protein belongs to the G-alpha family. As to quaternary structure, g proteins are composed of 3 units; alpha, beta and gamma. The alpha chain contains the guanine nucleotide binding site.

Functionally, guanine nucleotide-binding proteins (G proteins) are involved as modulators or transducers in various transmembrane signaling systems. The chain is Guanine nucleotide-binding protein alpha-8 subunit (gpa-8) from Caenorhabditis briggsae.